We begin with the raw amino-acid sequence, 353 residues long: MFKRFIFITLSLLVFACFKSNKKSIKSDKVVVGVLAHGSFYDKGYNQSVHDGVVKLRDNFGIKLITKSLRPYPIEGKRLLTVDEAMTEDAYEVQKNPLNLFWLIGYRFSDLSVKLSYERPDIYYGIIDAFDYGDIQVPKNSLAIKFRNEEAAFLAGYIAAKMSRKEKIGFLTGPMSEHVKDFKFGFKAGIFYANPKLRLVSKKAPSLFDKEKGKAMALFMYKEDKVGVIFPIAGITGLGVYDAAKELGPKYYVIGLNQDQSYIAPQNVITSIIKDIGKVIYSISSEYINNRVFKGGIIIDRGLKEGVIEIVKDPDVLNNRLVDEVIDLENKIISGEIIVPDSEYAFDLFKSKL.

Residues 1–16 form the signal peptide; sequence MFKRFIFITLSLLVFA. Cys-17 carries N-palmitoyl cysteine lipidation. Residue Cys-17 is the site of S-diacylglycerol cysteine attachment.

Belongs to the BMP lipoprotein family. Monomer.

It is found in the cell inner membrane. Its function is as follows. May be part of an ABC-type nucleoside uptake system involved in the purine salvage pathway. The polypeptide is Basic membrane protein C (bmpC) (Borreliella burgdorferi (strain ATCC 35210 / DSM 4680 / CIP 102532 / B31) (Borrelia burgdorferi)).